A 238-amino-acid chain; its full sequence is Probable septum site-determining protein MinC (238 aa).

This sequence belongs to the MinC family. In terms of assembly, interacts with MinD and FtsZ.

Functionally, cell division inhibitor that blocks the formation of polar Z ring septums. Rapidly oscillates between the poles of the cell to destabilize FtsZ filaments that have formed before they mature into polar Z rings. Prevents FtsZ polymerization. In Xylella fastidiosa (strain M23), this protein is Probable septum site-determining protein MinC.